The following is a 3515-amino-acid chain: Microtubule-actin cross-linking factor 1, isoforms 6/7 (3515 aa).

Disordered stretches follow at residues 1-23 (MGKPLSRPDCLRRNPSCLGKGEE), 108-136 (VQKSAPVPPRRRPNAERKDNVNRRSWKSF), 155-196 (VSEA…TLEH), 965-1178 (TEED…AVPT), 1217-1298 (SPAA…SPAA), 1710-1730 (EELATSGGQSPTGEQIPQFQQ), and 3078-3108 (PTHAPFIEKSRSGGRKSLSQPTPPPMPILSQ). Residues 120-129 (PNAERKDNVN) are compositionally biased toward basic and acidic residues. Residues 157–245 (EAGASNPSLQ…ESEAVATSGN (89 aa)) are 13 X 13 AA approximate tandem repeat of P-T-S-P-A-A-A-V-P-T-P-E-E. 2 stretches are compositionally biased toward low complexity: residues 995-1031 (STPEEPASPAAAVPTPEEPTSPAAAVPTPEEPTSPAA) and 1040-1139 (TSPA…AVPT). 13 repeat units span residues 1012–1024 (EPTSPAAAVPTPE), 1026–1037 (PTSPAAAVPPPE), 1038–1051 (EPTSPAAAVPTPEE), 1052–1064 (PTSPAAAVPTPEE), 1065–1077 (PTSPAAAVPTPEE), 1078–1090 (PTSPAAAVPTPEE), 1091–1103 (PTSPAAAVPTPEE), 1104–1116 (PTSPAAAVPTPEE), 1117–1129 (PASPAAAVPTPEE), 1130–1142 (PASPAAAVPTPEE), 1143–1155 (PAFPAPAVPTPEE), 1156–1168 (SASAAVAVPTPEE), and 1169–1178 (SASPAAAVPT). Pro residues predominate over residues 1140–1151 (PEEPAFPAPAVP). Composition is skewed to low complexity over residues 1162 to 1178 (AVPTPEESASPAAAVPT) and 1268 to 1298 (SSPAASVPTPEEPASPAAAVSNLEEPASPAA). A compositionally biased stretch (polar residues) spans 1715-1730 (SGGQSPTGEQIPQFQQ). EF-hand domains are found at residues 3168–3203 (HKKSRVMDFFRRIDKDQDGKITRQEFIDGILASKFP) and 3204–3239 (TTKLEMTAVADIFDRDGDGYIDYYEFVAALHPNKDA). Ca(2+) is bound by residues D3181, D3183, D3185, K3187, E3192, D3217, D3219, D3221, Y3223, and E3228. The GAR domain maps to 3244–3316 (TDADKIEDEV…EFLVKNDPCR (73 aa)). The tract at residues 3332–3515 (PEGASQGMTP…ASPRTPGPKR (184 aa)) is disordered. The span at 3352–3386 (SSRAASPTRSSSSASQSNHSCTSMPSSPATPASGT) shows a compositional bias: low complexity. The span at 3402 to 3426 (TFHSSRTSLAGDTSNSSSPASTGAK) shows a compositional bias: polar residues. Positions 3437–3451 (SRPGSRAGSRAGSRA) are enriched in low complexity. Polar residues predominate over residues 3466 to 3488 (ETQSACSDTSESSAAGGQGNSRR).

The protein resides in the cytoplasm. Its subcellular location is the cytoskeleton. The polypeptide is Microtubule-actin cross-linking factor 1, isoforms 6/7 (Homo sapiens (Human)).